A 380-amino-acid polypeptide reads, in one-letter code: Cytochrome b (380 aa).

The next 4 helical transmembrane spans lie at 34 to 54, 78 to 99, 114 to 134, and 179 to 199; these read FGSL…LLAM, WLIR…YLHI, WNTG…GYVL, and FFAL…IHLT. Residues histidine 84 and histidine 98 each coordinate heme b. Positions 183 and 197 each coordinate heme b. An a ubiquinone-binding site is contributed by histidine 202. The next 4 helical transmembrane spans lie at 227 to 247, 289 to 309, 321 to 341, and 348 to 368; these read LKDF…ALFS, LGGV…PFLH, ISQL…WVGS, and FIII…ILFP.

The protein belongs to the cytochrome b family. In terms of assembly, the cytochrome bc1 complex contains 11 subunits: 3 respiratory subunits (MT-CYB, CYC1 and UQCRFS1), 2 core proteins (UQCRC1 and UQCRC2) and 6 low-molecular weight proteins (UQCRH/QCR6, UQCRB/QCR7, UQCRQ/QCR8, UQCR10/QCR9, UQCR11/QCR10 and a cleavage product of UQCRFS1). This cytochrome bc1 complex then forms a dimer. Heme b is required as a cofactor.

It is found in the mitochondrion inner membrane. Its function is as follows. Component of the ubiquinol-cytochrome c reductase complex (complex III or cytochrome b-c1 complex) that is part of the mitochondrial respiratory chain. The b-c1 complex mediates electron transfer from ubiquinol to cytochrome c. Contributes to the generation of a proton gradient across the mitochondrial membrane that is then used for ATP synthesis. The sequence is that of Cytochrome b (MT-CYB) from Pelecanoides urinatrix (Common diving petrel).